A 145-amino-acid polypeptide reads, in one-letter code: uncharacterized protein (145 aa).

This is an uncharacterized protein from Rickettsia prowazekii (strain Madrid E).